The chain runs to 404 residues: Zinc metalloprotease Rip1 (404 aa).

Residues methionine 1–histidine 21 form a helical membrane-spanning segment. Histidine 21 is a Zn(2+) binding site. Glutamate 22 is an active-site residue. Residue histidine 25 participates in Zn(2+) binding. The chain crosses the membrane as a helical span at residues proline 104 to leucine 124. Positions valine 121–glycine 203 constitute a PDZ domain. Aspartate 202 is a binding site for Zn(2+). 2 consecutive transmembrane segments (helical) span residues leucine 313–leucine 333 and leucine 373–threonine 393.

Belongs to the peptidase M50B family. The cofactor is Zn(2+).

Its subcellular location is the cell membrane. Its function is as follows. A probable site-2 protease (S2P) that cleaves type-2 transmembrane proteins within their membrane-spanning domains. Degrades anti-sigma factors RskA, RslA and RsmA, releasing sigma factors SigK, SigL and SigM from the cellular membrane, activating signaling pathways. Does not act on RsdA. Regulates the composition of extractable mycolic acids in the cell envelope in response to changes in membrane fluidity. Mediates transcriptional regulation of mycolic acid biosynthetic genes in response to detergent. Probably also cleaves PbpB (PBP3, FtsI); this cleavage is inhibited by Wag31-PbpBI interaction. Regulated intramembrane proteolysis (RIP) occurs when an extracytoplasmic signal (possibly oxidative stress) triggers a concerted proteolytic cascade to transmit information and elicit cellular responses. The membrane-spanning regulatory substrate protein (includes anti-sigma factors RskA, RslA, RsmA, and PbpB) is first cut extracytoplasmically (site-1 protease, S1P), then within the membrane itself (site-2 protease, S2P, this entry), while cytoplasmic proteases finish degrading the regulatory protein, liberating the effector protein (ECF sigma factors SigK, SigL and SigM). The chain is Zinc metalloprotease Rip1 (rip1) from Mycobacterium tuberculosis (strain ATCC 35801 / TMC 107 / Erdman).